The primary structure comprises 387 residues: Methylthioribose-1-phosphate isomerase (387 aa).

D257 serves as the catalytic Proton donor.

The protein belongs to the eIF-2B alpha/beta/delta subunits family. MtnA subfamily.

The protein localises to the cytoplasm. Its subcellular location is the nucleus. The catalysed reaction is 5-(methylsulfanyl)-alpha-D-ribose 1-phosphate = 5-(methylsulfanyl)-D-ribulose 1-phosphate. The protein operates within amino-acid biosynthesis; L-methionine biosynthesis via salvage pathway; L-methionine from S-methyl-5-thio-alpha-D-ribose 1-phosphate: step 1/6. In terms of biological role, catalyzes the interconversion of methylthioribose-1-phosphate (MTR-1-P) into methylthioribulose-1-phosphate (MTRu-1-P). In Neosartorya fischeri (strain ATCC 1020 / DSM 3700 / CBS 544.65 / FGSC A1164 / JCM 1740 / NRRL 181 / WB 181) (Aspergillus fischerianus), this protein is Methylthioribose-1-phosphate isomerase (mri1).